A 380-amino-acid polypeptide reads, in one-letter code: Cytochrome b (380 aa).

A run of 4 helical transmembrane segments spans residues 34–54, 78–99, 114–134, and 179–199; these read FGSL…FLAM, WLLR…YMHI, WNIG…GYVL, and FFAF…VHLL. Residues histidine 84 and histidine 98 each coordinate heme b. Residues histidine 183 and histidine 197 each coordinate heme b. Histidine 202 is an a ubiquinone binding site. The next 4 helical transmembrane spans lie at 227-247, 289-309, 321-341, and 348-368; these read YKDV…ALFS, LGGV…PFVH, LAQV…WLGG, and YIFL…LLIP.

Belongs to the cytochrome b family. In terms of assembly, the cytochrome bc1 complex contains 3 respiratory subunits (MT-CYB, CYC1 and UQCRFS1), 2 core proteins (UQCRC1 and UQCRC2) and probably 6 low-molecular weight proteins. The cofactor is heme b.

It localises to the mitochondrion inner membrane. In terms of biological role, component of the ubiquinol-cytochrome c reductase complex (complex III or cytochrome b-c1 complex) that is part of the mitochondrial respiratory chain. The b-c1 complex mediates electron transfer from ubiquinol to cytochrome c. Contributes to the generation of a proton gradient across the mitochondrial membrane that is then used for ATP synthesis. This chain is Cytochrome b (MT-CYB), found in Branchiostoma floridae (Florida lancelet).